Consider the following 183-residue polypeptide: Ribulose bisphosphate carboxylase small subunit, chloroplastic 7 (183 aa).

Residues 1 to 43 (MAAAMMNKTVVVGKESVKGGVAPKVAMSRGGFLNSGIMKKDRD) constitute a chloroplast transit peptide.

This sequence belongs to the RuBisCO small chain family. As to quaternary structure, heterohexadecamer of 8 large and 8 small subunits.

Its subcellular location is the plastid. It is found in the chloroplast. RuBisCO catalyzes two reactions: the carboxylation of D-ribulose 1,5-bisphosphate, the primary event in carbon dioxide fixation, as well as the oxidative fragmentation of the pentose substrate. Both reactions occur simultaneously and in competition at the same active site. Although the small subunit is not catalytic it is essential for maximal activity. The chain is Ribulose bisphosphate carboxylase small subunit, chloroplastic 7 from Acetabularia peniculus (Green alga).